Consider the following 283-residue polypeptide: Ribose-phosphate pyrophosphokinase (283 aa).

ATP contacts are provided by residues 34 to 36 (DGE) and 89 to 90 (RQ). Residues His-120 and Asp-159 each coordinate Mg(2+). Lys-182 is an active-site residue. Residues Arg-184 and Asp-208 each coordinate D-ribose 5-phosphate.

Belongs to the ribose-phosphate pyrophosphokinase family. Class III (archaeal) subfamily. Mg(2+) serves as cofactor.

It localises to the cytoplasm. It carries out the reaction D-ribose 5-phosphate + ATP = 5-phospho-alpha-D-ribose 1-diphosphate + AMP + H(+). The protein operates within metabolic intermediate biosynthesis; 5-phospho-alpha-D-ribose 1-diphosphate biosynthesis; 5-phospho-alpha-D-ribose 1-diphosphate from D-ribose 5-phosphate (route I): step 1/1. In terms of biological role, involved in the biosynthesis of the central metabolite phospho-alpha-D-ribosyl-1-pyrophosphate (PRPP) via the transfer of pyrophosphoryl group from ATP to 1-hydroxyl of ribose-5-phosphate (Rib-5-P). This is Ribose-phosphate pyrophosphokinase from Methanosarcina acetivorans (strain ATCC 35395 / DSM 2834 / JCM 12185 / C2A).